The sequence spans 272 residues: Magnetosome protein MamQ 1 (272 aa).

The Cytoplasmic segment spans residues 1–46; sequence MALGDANVGSAPGVDFSALQRVKQSEELLAQLYVVEETPRRLGRGP. Residues 47–67 traverse the membrane as a helical segment; it reads VHALMVISVLSVVAFIATLLM. Over 68-272 the chain is Lumenal; the sequence is RYNTFVTMSE…PLNHAQDIKK (205 aa).

It belongs to the LemA family.

The protein resides in the magnetosome membrane. Essential for magnetosome formation. Can be used to induce magnetosome formation. This is Magnetosome protein MamQ 1 (mamQ1) from Paramagnetospirillum magneticum (strain ATCC 700264 / AMB-1) (Magnetospirillum magneticum).